A 745-amino-acid chain; its full sequence is Aminopeptidase NAALADL1 (745 aa).

Residues 1-6 (MHWAKI) lie on the Cytoplasmic side of the membrane. The helical; Signal-anchor for type II membrane protein transmembrane segment at 7 to 28 (LGVGIGAAALLGLGIILGHFAI) threads the bilayer. The Extracellular portion of the chain corresponds to 29–745 (PKATEPLASS…AATLQPVTDL (717 aa)). Residues Asn-128, Asn-141, and Asn-235 are each glycosylated (N-linked (GlcNAc...) asparagine). Positions 263 and 266 each coordinate Ca(2+). N-linked (GlcNAc...) asparagine glycosylation is found at Asn-279, Asn-304, and Asn-350. A disulfide bridge links Cys-301 with Cys-318. 2 residues coordinate Zn(2+): His-373 and Asp-383. The active-site Proton donor/acceptor is the Glu-421. Zn(2+) is bound at residue Glu-422. Positions 430 and 433 each coordinate Ca(2+). Position 450 (Asp-450) interacts with Zn(2+). 2 N-linked (GlcNAc...) asparagine glycosylation sites follow: Asn-456 and Asn-497. Residue His-550 participates in Zn(2+) binding. Asn-593 and Asn-620 each carry an N-linked (GlcNAc...) asparagine glycan.

It belongs to the peptidase M28 family. M28B subfamily. As to quaternary structure, homodimer. The cofactor is Zn(2+). N-glycosylated. Detected on apical villi on the brush border membrane of ileum enterocytes (at protein level). Mainly expressed in the distal small intestine.

Its subcellular location is the apical cell membrane. Functionally, aminopeptidase with broad substrate specificity. Has lower activity with substrates that have Asp or Glu in the P2' position, or Pro in the P3' position. Lacks activity with substrates that have both Pro in the P3' position and Asp or Glu in the P2' position. Lacks carboxypeptidase activity. Lacks dipeptidyl-peptidase IV type activity. This is Aminopeptidase NAALADL1 (Naaladl1) from Rattus norvegicus (Rat).